We begin with the raw amino-acid sequence, 204 residues long: Holliday junction branch migration complex subunit RuvA (204 aa).

Positions 1-67 are domain I; that stretch reads MIGYLEGKIL…QPKPVLIGFN (67 aa). A domain II region spans residues 68 to 145; sequence SLEEREFFER…VFAGEHGGEP (78 aa). A flexible linker region spans residues 146–156; it reads AGPAPVEENFH. The segment at 156 to 204 is domain III; sequence HLLVLDVLVNQLGHKAAEAKELINQAIKRNPAISSPEELFDEVYRGETG.

It belongs to the RuvA family. In terms of assembly, homotetramer. Forms an RuvA(8)-RuvB(12)-Holliday junction (HJ) complex. HJ DNA is sandwiched between 2 RuvA tetramers; dsDNA enters through RuvA and exits via RuvB. An RuvB hexamer assembles on each DNA strand where it exits the tetramer. Each RuvB hexamer is contacted by two RuvA subunits (via domain III) on 2 adjacent RuvB subunits; this complex drives branch migration. In the full resolvosome a probable DNA-RuvA(4)-RuvB(12)-RuvC(2) complex forms which resolves the HJ.

It is found in the cytoplasm. Its function is as follows. The RuvA-RuvB-RuvC complex processes Holliday junction (HJ) DNA during genetic recombination and DNA repair, while the RuvA-RuvB complex plays an important role in the rescue of blocked DNA replication forks via replication fork reversal (RFR). RuvA specifically binds to HJ cruciform DNA, conferring on it an open structure. The RuvB hexamer acts as an ATP-dependent pump, pulling dsDNA into and through the RuvAB complex. HJ branch migration allows RuvC to scan DNA until it finds its consensus sequence, where it cleaves and resolves the cruciform DNA. In Desulfatibacillum aliphaticivorans, this protein is Holliday junction branch migration complex subunit RuvA.